Here is a 77-residue protein sequence, read N- to C-terminus: Apidermin 2 (77 aa).

A signal peptide spans 1–16 (MKSLLILFAIVAVVAA).

Expressed in the epidermis, hypopharyngeal glands, fat body, trachea, esophagus and stomach.

Its subcellular location is the secreted. Antimicrobial peptide that binds cell wall carbohydrates of microbial symbionts and induces structural damage. Binds the cell wall carbohydrates mannan, N-acetyl-D-glucosamine and lipopolysaccharide. Can target fungi, Gram-negative and Gram-positive bacteria. This Apis mellifera (Honeybee) protein is Apidermin 2.